We begin with the raw amino-acid sequence, 735 residues long: Catalase-peroxidase (735 aa).

Residues 1–26 (MENQNRQNASQCPFHGSITNQSSNRT) show a composition bias toward polar residues. Residues 1 to 29 (MENQNRQNASQCPFHGSITNQSSNRTTNK) are disordered. The segment at residues 100–223 (WHSAGTYRIG…LAASVMGLIY (124 aa)) is a cross-link (tryptophyl-tyrosyl-methioninium (Trp-Tyr) (with M-249)). H101 (proton acceptor) is an active-site residue. The segment at residues 223–249 (YVNPEGPDGKPDPKAAARDIRETFRRM) is a cross-link (tryptophyl-tyrosyl-methioninium (Tyr-Met) (with W-100)). H264 contacts heme b.

Belongs to the peroxidase family. Peroxidase/catalase subfamily. In terms of assembly, homodimer or homotetramer. The cofactor is heme b. In terms of processing, formation of the three residue Trp-Tyr-Met cross-link is important for the catalase, but not the peroxidase activity of the enzyme.

It carries out the reaction H2O2 + AH2 = A + 2 H2O. It catalyses the reaction 2 H2O2 = O2 + 2 H2O. Bifunctional enzyme with both catalase and broad-spectrum peroxidase activity. The chain is Catalase-peroxidase from Geobacillus thermodenitrificans (strain NG80-2).